We begin with the raw amino-acid sequence, 712 residues long: Solute carrier organic anion transporter family member 1C1 (712 aa).

Over 1-43 (MDTSSKENIQLFCKTSVQPVGRPSFKTEYPSSEEKQPCCGELK) the chain is Cytoplasmic. Residues 44–63 (VFLCALSFVYFAKALAEGYL) form a helical membrane-spanning segment. The Extracellular segment spans residues 64 to 82 (KSTITQIERRFDIPSSLVG). A helical membrane pass occupies residues 83–103 (VIDGSFEIGNLLVITFVSYFG). Residues 104-109 (AKLHRP) are Cytoplasmic-facing. The chain crosses the membrane as a helical span at residues 110 to 134 (KIIGAGCVIMGVGTLLIAMPQFFME). The Extracellular segment spans residues 135 to 184 (QYKYERYSPSSNSTLSISPCLLESSSQLPVSVMEKSKSKISNECEVDTSS). An N-linked (GlcNAc...) asparagine glycan is attached at Asn146. A helical membrane pass occupies residues 185–213 (SMWIYVFLGNLLRGIGETPIQPLGIAYLD). The Cytoplasmic segment spans residues 214 to 232 (DFASEDNAAFYIGCVQTVA). The chain crosses the membrane as a helical span at residues 233–253 (IIGPIFGFLLGSLCAKLYVDI). The Extracellular segment spans residues 254–271 (GFVNLDHITITPKDPQWV). The chain crosses the membrane as a helical span at residues 272–296 (GAWWLGYLIAGIISLLAAVPFWYLP). The Cytoplasmic portion of the chain corresponds to 297–348 (KSLPRSQSREDSNSSSEKSKFIIDDHTDYQTPQGENAKIMEMARDFLPSLKN). A helical transmembrane segment spans residues 349-370 (LFGNPVYFLYLCTSTVQFNSLF). Topologically, residues 371 to 390 (GMVTYKPKYIEQQYGQSSSR) are extracellular. A helical transmembrane segment spans residues 391–414 (ANFVIGLINIPAVALGIFSGGIVM). Residues 415 to 418 (KKFR) lie on the Cytoplasmic side of the membrane. The chain crosses the membrane as a helical span at residues 419–442 (ISVCGAAKLYLGSSVFGYLLFLSL). Over 443–554 (FALGCENSDV…NGCPQMFLYF (112 aa)) the chain is Extracellular. In terms of domain architecture, Kazal-like spans 470–525 (RALFSDCNSRCKCSETKWEPMCGENGITYVSACLAGCQTSNRSGKNIIFYNCTCVG). Disulfide bonds link Cys476–Cys506, Cys482–Cys502, and Cys491–Cys523. Asn510, Asn520, and Asn533 each carry an N-linked (GlcNAc...) asparagine glycan. Residues 555 to 577 (LVISVITSYTLSLGGIPGYILLL) traverse the membrane as a helical segment. Topologically, residues 578 to 586 (RCIKPQLKS) are cytoplasmic. A helical transmembrane segment spans residues 587 to 612 (FALGIYTLAIRVLAGIPAPVYFGVLI). The Extracellular segment spans residues 613 to 646 (DTSCLKWGFKRCGSRGSCRLYDSNVFRHIYLGLT). A helical transmembrane segment spans residues 647 to 664 (VILGTVSILLSIAVLFIL). Over 665-712 (KKNYVSKHRSFITKRERTMVSTRFQKENYTTSDHLLQPNYWPGKETQL) the chain is Cytoplasmic.

This sequence belongs to the organo anion transporter (TC 2.A.60) family. In terms of tissue distribution, highly expressed in brain and in Leydig cells in testis. Localized in nests of Leydig cells (at protein level). Expressed in choroid plexus (at protein level). Not strongly enriched in cerebral microvessels.

Its subcellular location is the cell membrane. The enzyme catalyses 3,3',5'-triiodo-L-thyronine(out) = 3,3',5'-triiodo-L-thyronine(in). It catalyses the reaction L-thyroxine(out) = L-thyroxine(in). It carries out the reaction L-thyroxine sulfate(out) = L-thyroxine sulfate(in). In terms of biological role, mediates the Na(+)-independent high affinity transport of organic anions such as the thyroid hormones L-thyroxine (T4), L-thyroxine sulfate (T4S), and 3,3',5'-triiodo-L-thyronine (reverse T3, rT3) at the plasma membrane. Regulates T4 levels in different brain regions by transporting T4, and also by serving as an export pump for T4S, which is a source of T4 after hydrolysis by local sulfatases. Increases the access of these substrates to the intracellular sites where they are metabolized by the deiodinases. Other potential substrates, such as triiodothyronine (T3), 17-beta-glucuronosyl estradiol (17beta-estradiol 17-O-(beta-D-glucuronate)), estrone-3-sulfate (E1S) and sulfobromophthalein (BSP) are transported with much lower efficiency. Transports T4 and E1S in a pH-insensitive manner. Facilitates the transport of thyroid hormones across the blood-brain barrier and into glia and neuronal cells in the brain. This chain is Solute carrier organic anion transporter family member 1C1 (SLCO1C1), found in Homo sapiens (Human).